We begin with the raw amino-acid sequence, 132 residues long: Small ribosomal subunit protein uS11 (132 aa).

This sequence belongs to the universal ribosomal protein uS11 family. Part of the 30S ribosomal subunit.

Its function is as follows. Located on the platform of the 30S subunit. The protein is Small ribosomal subunit protein uS11 of Saccharolobus solfataricus (strain ATCC 35092 / DSM 1617 / JCM 11322 / P2) (Sulfolobus solfataricus).